The sequence spans 4835 residues: Midasin (4835 aa).

6 AAA-ATPase protomer regions span residues 12 to 161 (EVLR…PLVL), 324 to 689 (RSLD…HRFR), 797 to 1049 (MTTI…AEII), 1096 to 1375 (KFQD…DYIT), 1489 to 1738 (APTT…FGYR), and 1821 to 2110 (ALEA…SIDI). ATP-binding positions include 31–38 (GPSASGRT), 356–363 (GPTGIGKT), 814–821 (GTTSSGKT), 1127–1134 (GVSGAGKT), 1513–1520 (GDPGVGKS), and 1839–1846 (GSPESGKS). The segment at 2197–4058 (SVFIASTLNA…DGTGDQNVSK (1862 aa)) is linker. 2 disordered regions span residues 4033 to 4056 (DQKE…DQNV) and 4108 to 4523 (IEEE…LLNP). Acidic residues-rich tracts occupy residues 4109–4133 (EEED…QGEA), 4141–4150 (EDDDSAEEYS), 4226–4241 (ADGE…EEEQ), 4282–4291 (VDIDDNEASD), and 4315–4330 (NDEE…DQEN). Residues 4331–4346 (ITDSNPDANEVGTNDQ) are compositionally biased toward polar residues. Basic and acidic residues-rich tracts occupy residues 4347 to 4360 (KQTH…RQEN), 4394 to 4415 (EFQR…KDEA), and 4429 to 4438 (VEFDDSKSGR). Polar residues predominate over residues 4468 to 4477 (HNSSCETSQS). Residues 4478-4488 (SHDRPPAEHLN) are compositionally biased toward basic and acidic residues. The VWFA domain maps to 4629-4818 (QVLLAVDDSS…RHIEDLPETL (190 aa)).

Belongs to the midasin family. In terms of assembly, associates with pre-60S ribosomes in the nucleoplasm.

It is found in the nucleus. It localises to the nucleolus. The protein resides in the nucleoplasm. In terms of biological role, nuclear chaperone required for maturation and nuclear export of pre-60S ribosome subunits. Functions at successive maturation steps to remove ribosomal factors at critical transition points, first driving the exit of early pre-60S particles from the nucleolus and then driving late pre-60S particles from the nucleus. In Giardia intestinalis (Giardia lamblia), this protein is Midasin (MDN1).